Here is a 346-residue protein sequence, read N- to C-terminus: F(420)H(2) dehydrogenase subunit F (346 aa).

4Fe-4S ferredoxin-type domains lie at 5–34 and 46–76; these read IAEV…VKKA and YEKG…ENEL. [4Fe-4S] cluster contacts are provided by C14, C17, C20, C24, C55, C58, C61, and C65.

In terms of assembly, the FPO complex is composed of at least 13 different subunits. It depends on [4Fe-4S] cluster as a cofactor. The cofactor is FAD.

It is found in the membrane. The protein localises to the cytoplasm. The catalysed reaction is methanophenazine + reduced coenzyme F420-(gamma-L-Glu)(n) = dihydromethanophenazine + oxidized coenzyme F420-(gamma-L-Glu)(n) + H(+). It carries out the reaction reduced coenzyme F420-(gamma-L-Glu)(n) + 2 oxidized [2Fe-2S]-[ferredoxin] = oxidized coenzyme F420-(gamma-L-Glu)(n) + 2 reduced [2Fe-2S]-[ferredoxin] + 3 H(+). Its function is as follows. Component of the F(420)H(2) dehydrogenase (FPO complex) which is part of the energy-conserving F(420)H(2):heterodisulfide oxidoreductase system. The membrane-bound electron transfer system of the complex plays an important role in the metabolism of methylotrophic methanogens when the organisms grow on methanol or methylamines. Catalyzes the oxidation of methanophenazine to dihydromethanophenazine. It shuttles electrons from F(420)H(2), via FAD and iron-sulfur (Fe-S) centers, to methanophenazine (an electron carrier in the membrane). It couples the redox reaction to proton translocation (for every two electrons transferred, two hydrogen ions are translocated across the cytoplasmic membrane), and thus conserves the redox energy in a proton gradient. It also catalyzes the oxidation of F(420)H(2) with quinones such as 2,3-dimethyl-1,4-naphthoquinone, 2-methyl-1,4-naphthoquinone and tetramethyl-p-benzoquinone. Might have a dual function, acting as an electron input module when connected to the membrane integral Fpo complex, or as a soluble single subunit, being involved in the reoxydation of reduced ferredoxin in the cytoplasm. The chain is F(420)H(2) dehydrogenase subunit F (fpoF) from Methanosarcina mazei (strain ATCC BAA-159 / DSM 3647 / Goe1 / Go1 / JCM 11833 / OCM 88) (Methanosarcina frisia).